The following is a 422-amino-acid chain: Metallocarboxypeptidase A (422 aa).

Residues 1-17 (MRSVLSFALLAANVVSA) form the signal peptide. Residues 18–112 (AVLAPFDYSG…FEAYSAGYAP (95 aa)) constitute a propeptide, activation peptide. The region spanning 119-419 (SYHSYQDHLS…AGTVAMLKAV (301 aa)) is the Peptidase M14 domain. Residues H179 and E182 each contribute to the Zn(2+) site. Residues 179–182 (HARE), R237, and 254–255 (NR) contribute to the substrate site. An intrachain disulfide couples C248 to C271. Residue H309 coordinates Zn(2+). 310 to 311 (SY) contacts substrate. E385 (proton donor/acceptor) is an active-site residue.

The protein belongs to the peptidase M14 family. Requires Zn(2+) as cofactor.

It localises to the secreted. Functionally, extracellular metalloprotease that contributes to pathogenicity. This Arthroderma otae (strain ATCC MYA-4605 / CBS 113480) (Microsporum canis) protein is Metallocarboxypeptidase A (MCPA).